The following is a 394-amino-acid chain: Elongation factor Tu (394 aa).

The region spanning 10–204 (KPHVNIGTIG…AVDSYIPQPI (195 aa)) is the tr-type G domain. Residues 19-26 (GHVDHGKT) are G1. 19–26 (GHVDHGKT) contacts GTP. Threonine 26 is a binding site for Mg(2+). Residues 60 to 64 (GITIS) are G2. A G3 region spans residues 81–84 (DCPG). GTP-binding positions include 81 to 85 (DCPGH) and 136 to 139 (NKVD). Residues 136-139 (NKVD) form a G4 region. The G5 stretch occupies residues 174–176 (SAL).

This sequence belongs to the TRAFAC class translation factor GTPase superfamily. Classic translation factor GTPase family. EF-Tu/EF-1A subfamily. Monomer.

The protein localises to the cytoplasm. The enzyme catalyses GTP + H2O = GDP + phosphate + H(+). In terms of biological role, GTP hydrolase that promotes the GTP-dependent binding of aminoacyl-tRNA to the A-site of ribosomes during protein biosynthesis. This Rickettsia prowazekii (strain Madrid E) protein is Elongation factor Tu.